A 338-amino-acid chain; its full sequence is 1-aminocyclopropane-1-carboxylate deaminase (338 aa).

Lys51 carries the N6-(pyridoxal phosphate)lysine modification. Catalysis depends on Ser78, which acts as the Nucleophile.

Belongs to the ACC deaminase/D-cysteine desulfhydrase family. Homotrimer. Requires pyridoxal 5'-phosphate as cofactor.

It catalyses the reaction 1-aminocyclopropane-1-carboxylate + H2O = 2-oxobutanoate + NH4(+). Catalyzes a cyclopropane ring-opening reaction, the irreversible conversion of 1-aminocyclopropane-1-carboxylate (ACC) to ammonia and alpha-ketobutyrate. Allows growth on ACC as a nitrogen source. This is 1-aminocyclopropane-1-carboxylate deaminase from Burkholderia vietnamiensis (strain G4 / LMG 22486) (Burkholderia cepacia (strain R1808)).